The primary structure comprises 222 residues: Pro-opiomelanocortin-1 (222 aa).

The first 28 residues, 1-28 (MVRGERMLCPAWLLALAVLCAAGSEVRA), serve as a signal peptide directing secretion. The propeptide occupies 29–105 (QCMEDARCRD…DPESSPQHEH (77 aa)).

This sequence belongs to the POMC family. In terms of processing, specific enzymatic cleavages at paired basic residues yield the different active peptides.

It is found in the secreted. Functionally, stimulates the adrenal glands to release cortisol. Anorexigenic peptide. Increases the pigmentation of skin by increasing melanin production in melanocytes. Its function is as follows. Increases the pigmentation of skin by increasing melanin production in melanocytes. In terms of biological role, endogenous orexigenic opiate. Functionally, endogenous opiate. The sequence is that of Pro-opiomelanocortin-1 (pomca) from Cyprinus carpio (Common carp).